The chain runs to 369 residues: MEGSWRDVLAVLVILAQLTVSGSSYQIIEGPRNVTALKGSEARFNCTVTHGWKLIMWALNGIVELSLTSQKPIITSNRFTSASYNSTDSFISEMIIHNVQLNDSGPVQCSLQNSNVFGFAFLSVQVMGTLNIPSSNLIVTEGEPCNVTCYAVGWTPLPNISWELEVPVSHSSYYSFLEPGNSLRVLSVLDLTPLGNGTLTCVAEMKDLQASESLTVNLTVVQPPPDSIGGEGQALPTWAIILLAVAFSLLLILIIALIIIFCCCCVSRREKEESTYQNEIRKSANVRTGKADPETWLKSGKENYGYKSDEARAAQIASLPPKSGEVSLPEQRSSLPQQELDKHRPSPVTHPRVSFDIASPQKIRNVTIV.

An N-terminal signal peptide occupies residues 1–24 (MEGSWRDVLAVLVILAQLTVSGSS). 2 Ig-like V-type domains span residues 25–125 (YQII…LSVQ) and 128–217 (GTLN…LTVN). Residues 25–239 (YQIIEGPRNV…GEGQALPTWA (215 aa)) are Extracellular-facing. 2 N-linked (GlcNAc...) asparagine glycosylation sites follow: Asn-33 and Asn-45. Cys-46 and Cys-109 form a disulfide bridge. N-linked (GlcNAc...) asparagine glycans are attached at residues Asn-146, Asn-196, and Asn-217. Cys-149 and Cys-201 form a disulfide bridge. The chain crosses the membrane as a helical span at residues 240–260 (IILLAVAFSLLLILIIALIII). At 261 to 369 (FCCCCVSRRE…PQKIRNVTIV (109 aa)) the chain is on the cytoplasmic side. The tract at residues 321-354 (PKSGEVSLPEQRSSLPQQELDKHRPSPVTHPRVS) is disordered.

The protein belongs to the immunoglobulin superfamily. In terms of assembly, interacts with MAGI1 at tight junctions, forms a tripartite complex with NPHS1. Interacts with LNX1 isoform 2 via its PDZ 2 domain, it may also interact with other isoforms containing this domain. As to expression, in kidney, it is found in glomeruli and in the proximal tubules (at protein level).

It is found in the apical cell membrane. The protein localises to the cell junction. Its subcellular location is the tight junction. Provides, together with MAGI1, an adhesion machinery at tight junctions, which may regulate the permeability of kidney glomerulus and small intestinal epithelial cells. Mediates calcium-independent homophilic cell adhesion. In testis, it may function as a cell adhesion molecule rather than a tight-junction protein. It may participate in the adhesion between spermatogonia-spermatogonia, spermatogonia-Sertoli cells, and Sertoli cells-Sertoli cells. The polypeptide is Immunoglobulin superfamily member 5 (Igsf5) (Rattus norvegicus (Rat)).